The sequence spans 90 residues: Heat shock protein beta-7 (90 aa).

Residues 39–90 (PLTFPARPGGQGNIKTLGDAYEFTVDMRDFSPEDIIVTTSNNHIEVRAEKKP) form the sHSP domain.

This sequence belongs to the small heat shock protein (HSP20) family. As to quaternary structure, interacts with C-terminal domain of actin-binding protein 280. In terms of tissue distribution, found in both cardiac and skeletal muscle.

It is found in the cytoplasm. Its subcellular location is the nucleus. It localises to the cajal body. This chain is Heat shock protein beta-7 (Hspb7), found in Rattus norvegicus (Rat).